The chain runs to 880 residues: Alanine--tRNA ligase (880 aa).

Positions 566, 570, 668, and 672 each coordinate Zn(2+).

This sequence belongs to the class-II aminoacyl-tRNA synthetase family. It depends on Zn(2+) as a cofactor.

It localises to the cytoplasm. The enzyme catalyses tRNA(Ala) + L-alanine + ATP = L-alanyl-tRNA(Ala) + AMP + diphosphate. Its function is as follows. Catalyzes the attachment of alanine to tRNA(Ala) in a two-step reaction: alanine is first activated by ATP to form Ala-AMP and then transferred to the acceptor end of tRNA(Ala). Also edits incorrectly charged Ser-tRNA(Ala) and Gly-tRNA(Ala) via its editing domain. The chain is Alanine--tRNA ligase from Alkaliphilus oremlandii (strain OhILAs) (Clostridium oremlandii (strain OhILAs)).